The sequence spans 200 residues: Glycerol-3-phosphate acyltransferase (200 aa).

5 helical membrane-spanning segments follow: residues 2–22, 51–71, 84–104, 114–134, and 158–178; these read FNIP…AVIV, KAAA…VLLA, AIAA…FFGF, LGVL…IWLV, and LFFM…ILVL.

It belongs to the PlsY family. As to quaternary structure, probably interacts with PlsX.

The protein localises to the cell inner membrane. It catalyses the reaction an acyl phosphate + sn-glycerol 3-phosphate = a 1-acyl-sn-glycero-3-phosphate + phosphate. Its pathway is lipid metabolism; phospholipid metabolism. Catalyzes the transfer of an acyl group from acyl-phosphate (acyl-PO(4)) to glycerol-3-phosphate (G3P) to form lysophosphatidic acid (LPA). This enzyme utilizes acyl-phosphate as fatty acyl donor, but not acyl-CoA or acyl-ACP. This is Glycerol-3-phosphate acyltransferase from Neisseria meningitidis serogroup A / serotype 4A (strain DSM 15465 / Z2491).